Here is a 196-residue protein sequence, read N- to C-terminus: Pantothenic acid transporter PanT (196 aa).

6 consecutive transmembrane segments (helical) span residues 10 to 30, 35 to 55, 58 to 78, 99 to 119, 131 to 151, and 161 to 181; these read AILA…QFVI, FPVK…ILGW, GAFL…IVTT, WGLF…YFVY, AAFA…FLFF, and YLLG…AVIL.

In E.coli forms a stable energy-coupling factor (ECF) transporter complex composed of 2 membrane-embedded substrate-binding protein (S component), 2 ATP-binding proteins (A and A' components) and 2 transmembrane proteins (T component), probably with a stoichiometry of 2:1:1:2. May be able to interact with more than 1 S component at a time.

The protein localises to the cell membrane. Probably a pantothenic acid-binding protein that interacts with the energy-coupling factor (ECF) ABC-transporter complex. Unlike classic ABC transporters this ECF transporter provides the energy necessary to transport a number of different substrates. The substrates themselves are bound by transmembrane, not extracytoplasmic soluble proteins. The polypeptide is Pantothenic acid transporter PanT (panT) (Lactococcus lactis subsp. cremoris (strain MG1363)).